The sequence spans 238 residues: Endonuclease V (238 aa).

Residues Asp46 and Asp116 each contribute to the Mg(2+) site.

It belongs to the endonuclease V family. It depends on Mg(2+) as a cofactor.

Its subcellular location is the cytoplasm. It carries out the reaction Endonucleolytic cleavage at apurinic or apyrimidinic sites to products with a 5'-phosphate.. DNA repair enzyme involved in the repair of deaminated bases. Selectively cleaves double-stranded DNA at the second phosphodiester bond 3' to a deoxyinosine leaving behind the intact lesion on the nicked DNA. This chain is Endonuclease V, found in Bacillus subtilis (strain 168).